The following is a 410-amino-acid chain: Bifunctional malic/malolactic enzyme (410 aa).

The active-site Proton donor is Tyr-36. The Proton acceptor role is filled by Lys-91. Residues Glu-133, Asp-134, and Asp-159 each coordinate a divalent metal cation. Residues 192 to 195 (AGAA), Asn-286, and Asn-317 contribute to the NADP(+) site.

This sequence belongs to the malic enzymes family. As to quaternary structure, interacts with BrxC. The cofactor is Mg(2+). Requires Mn(2+) as cofactor.

It carries out the reaction (S)-malate + NADP(+) = pyruvate + CO2 + NADPH. It catalyses the reaction oxaloacetate + H(+) = pyruvate + CO2. The catalysed reaction is (S)-malate + H(+) = (S)-lactate + CO2. With respect to regulation, NADPH is a strong modulator that switches activity from a pyruvate-producing malic enzyme to a lactate-generating malolactic enzyme. Its function is as follows. Bifunctional enzyme with both malic and malolactic enzyme activities. In the absence of NADPH, catalyzes the reversible decarboxylation of malate to pyruvate. Can use NAD and NADP, but with a very strong preference for NADP. In the presence of excess NADPH, catalyzes the non-oxidative decarboxylation of malate to lactate. During growth on glucose, contributes to NADPH balancing via oxidation of the NADPH produced in excess by other enzymatic reactions. Can also catalyze the decarboxylation of oxaloacetate. This chain is Bifunctional malic/malolactic enzyme (ytsJ), found in Bacillus subtilis (strain 168).